The sequence spans 516 residues: Squalene epoxidase 5 (516 aa).

The next 2 membrane-spanning stretches (helical) occupy residues 3-23 and 45-65; these read FTNVCLWTLLAFMLTWTVFYV and ATDVIIVGAGVGGSALAYALA. FAD contacts are provided by residues 55 to 56, 75 to 76, arginine 83, phenylalanine 88, arginine 156, valine 172, aspartate 335, and methionine 348; these read VG and ER. The chain crosses the membrane as a helical span at residues 446–466; the sequence is LIYHLCAITLSSIGHLLSPFP.

Belongs to the squalene monooxygenase family. The cofactor is FAD. Expressed in seedlings, leaves, stems and inflorescences. Detected in siliques.

Its subcellular location is the membrane. The enzyme catalyses squalene + reduced [NADPH--hemoprotein reductase] + O2 = (S)-2,3-epoxysqualene + oxidized [NADPH--hemoprotein reductase] + H2O + H(+). It functions in the pathway terpene metabolism; lanosterol biosynthesis; lanosterol from farnesyl diphosphate: step 2/3. Its function is as follows. Catalyzes the stereospecific oxidation of squalene to (S)-2,3-epoxysqualene, and is considered to be a rate-limiting enzyme in steroid biosynthesis. The chain is Squalene epoxidase 5 (SQE5) from Arabidopsis thaliana (Mouse-ear cress).